We begin with the raw amino-acid sequence, 300 residues long: MRQRKNVTKFIKRAYRDMGELKQYKRYTKTRLNIISNKVFLLKNELYPLQPKKKRGKRDQQLKTTYTKKKLKRILSLLFRIGGKIYRKKIKKKKINLKKQQEPFTQNLTLHRLFRKFYLNLKLKQFKLLYKKYKGNEKVIIQQLEKRVDMVLLRSGFVRSLYEARQIINHKHLLVNGKIASLPGYMINVGDIISFKEGSMKRKLLKRLKKGLISKKSRKRWTNRNFKFKRFQNYKRKRQKKKNKNKVRATGPNYLEISHSLLLISLIEEPKLTAIKYPFTLQPEKNIKFITLLKKYKRLR.

Residues 146–209 enclose the S4 RNA-binding domain; the sequence is KRVDMVLLRS…MKRKLLKRLK (64 aa).

It belongs to the universal ribosomal protein uS4 family.

It is found in the mitochondrion. In Dictyostelium discoideum (Social amoeba), this protein is Small ribosomal subunit protein uS4m (mrps4).